A 430-amino-acid chain; its full sequence is Evolutionarily conserved signaling intermediate in Toll pathway, mitochondrial (430 aa).

The N-terminal 48 residues, 1 to 48 (MSWVQATLLARGLCRAWGGICRAALPGTSISQVPRQLPRGLHCSAAPH), are a transit peptide targeting the mitochondrion. Residues 41–66 (LHCSAAPHSSEQSLVSSPPEPRQRPT) form a disordered region. The segment covering 47 to 56 (PHSSEQSLVS) has biased composition (polar residues). Lys372 is covalently cross-linked (Glycyl lysine isopeptide (Lys-Gly) (interchain with G-Cter in ubiquitin)). The segment at 400 to 430 (LHTSSAGLEEPPPPEDHEEDDSRQRQQQGQS) is disordered. Over residues 411-420 (PPPEDHEEDD) the composition is skewed to acidic residues.

This sequence belongs to the ECSIT family. As to quaternary structure, interacts with MAP3K1, SMAD4 and TRAF6. Interacts with SMAD1 only after BMP4-treatment. Part of the mitochondrial complex I assembly/MCIA complex that comprises at least the core subunits TMEM126B, NDUFAF1, ECSIT and ACAD9 and complement subunits such as COA1 and TMEM186. Interacts with NDUFAF1. Interacts with ACAD9. Interacts with TRIM59. Interacts with TMEM70 and TMEM242. Interacts (when ubiquitinated) with NF-kappa-B subunits RELA and NFKB1. Interacts with RIGI, IFIT1 and MAVS; these interactions promote RLR-mediated type I IFN induction. Interacts with SQSTM1; this interaction inhibits TLR4 signaling via functional regulation of the TRAF6-ECSIT complex. Interacts with cereblon/CRBN; this interaction inhibits the ubiquitination of ECSIT. Post-translationally, ubiquitinated on Lys-372; leading to translocation in the nucleus together with RELA and NFKB1 and expression of NF-kappa-B-dependent genes.

It localises to the cytoplasm. The protein resides in the nucleus. The protein localises to the mitochondrion. Functionally, adapter protein that plays a role in different signaling pathways including TLRs and IL-1 pathways or innate antiviral induction signaling. Plays a role in the activation of NF-kappa-B by forming a signal complex with TRAF6 and TAK1/MAP3K7 to activate TAK1/MAP3K7 leading to activation of IKKs. Once ubiquitinated, interacts with the dissociated RELA and NFKB1 proteins and translocates to the nucleus where it induces NF-kappa-B-dependent gene expression. Plays a role in innate antiviral immune response by bridging the pattern recognition receptors RIGI and MDA5/IFIT1 to the MAVS complex at the mitochondrion. Promotes proteolytic activation of MAP3K1. Involved in the BMP signaling pathway. Required for normal embryonic development. In terms of biological role, as part of the MCIA complex, involved in the assembly of the mitochondrial complex I. In Macaca fascicularis (Crab-eating macaque), this protein is Evolutionarily conserved signaling intermediate in Toll pathway, mitochondrial.